The sequence spans 102 residues: Nucleoid-associated protein BCc_301 (102 aa).

It belongs to the YbaB/EbfC family. In terms of assembly, homodimer.

Its subcellular location is the cytoplasm. It is found in the nucleoid. Binds to DNA and alters its conformation. May be involved in regulation of gene expression, nucleoid organization and DNA protection. The sequence is that of Nucleoid-associated protein BCc_301 from Buchnera aphidicola subsp. Cinara cedri (strain Cc).